The following is a 210-amino-acid chain: ATP-dependent Clp protease proteolytic subunit (210 aa).

Ser-107 functions as the Nucleophile in the catalytic mechanism. His-132 is a catalytic residue.

It belongs to the peptidase S14 family. In terms of assembly, fourteen ClpP subunits assemble into 2 heptameric rings which stack back to back to give a disk-like structure with a central cavity, resembling the structure of eukaryotic proteasomes.

The protein localises to the cytoplasm. It catalyses the reaction Hydrolysis of proteins to small peptides in the presence of ATP and magnesium. alpha-casein is the usual test substrate. In the absence of ATP, only oligopeptides shorter than five residues are hydrolyzed (such as succinyl-Leu-Tyr-|-NHMec, and Leu-Tyr-Leu-|-Tyr-Trp, in which cleavage of the -Tyr-|-Leu- and -Tyr-|-Trp bonds also occurs).. Functionally, cleaves peptides in various proteins in a process that requires ATP hydrolysis. Has a chymotrypsin-like activity. Plays a major role in the degradation of misfolded proteins. The chain is ATP-dependent Clp protease proteolytic subunit from Zymomonas mobilis subsp. mobilis (strain ATCC 31821 / ZM4 / CP4).